Consider the following 49-residue polypeptide: MDNARIDLRSKYYVKPKADHPWLTRRTQSHQQVKPPKLPKKKPDPDKKD.

The interval 16-49 (PKADHPWLTRRTQSHQQVKPPKLPKKKPDPDKKD) is disordered.

May be involved in H(2) production during fermentative growth. This Escherichia coli (strain K12) protein is Protein YdfW (ydfW).